Consider the following 224-residue polypeptide: Small ribosomal subunit protein uS3 (224 aa).

Residues 20-89 form the KH type-2 domain; it reads LDEFLANYFK…NVNITVSPVP (70 aa).

It belongs to the universal ribosomal protein uS3 family. Part of the 30S ribosomal subunit.

Its function is as follows. Binds the lower part of the 30S subunit head. This chain is Small ribosomal subunit protein uS3, found in Staphylothermus marinus (strain ATCC 43588 / DSM 3639 / JCM 9404 / F1).